Consider the following 404-residue polypeptide: MSHAIDELQAIIADLKTELETEPKSSVGVASNSRLARDRIDRMSAEVVDSNPYSRLMALQRMNIVKDYERIRDKAVAIVGVGGVGSVTADMLTRCGIGKLILFDYDKVELDNMNRLFFTPDQAGLSKVAAAAATLSFINPDVEIETHNYNITTVENFDRFLDTISQGGRIAGQPVDLVLSCVDNFEARMAINAACNERNLNWFESGVSENAVSGHIQFIRPGDTACFACAPPLVVAENIDEKTLKREGVCAASLPTTMGITAGFLVQNALKYLLNFGEVSDYLGYNALSDFFPKMTLKPNPQCDDRNCIVRQKEFQARPKPVVIEEKAVSEEPLHATNEWGIELVAEDAPQSNPTPAETPVMGEGLRLAYEAPEKSSETSEETVTAATADETSLEDLMAQMKSM.

Positions 83, 104, 127, 150, and 184 each coordinate ATP. Residues cysteine 226 and cysteine 229 each coordinate Zn(2+). Cysteine 250 serves as the catalytic Glycyl thioester intermediate. Zn(2+)-binding residues include cysteine 303 and cysteine 308. The tract at residues 372–393 (APEKSSETSEETVTAATADETS) is disordered. The span at 382–391 (ETVTAATADE) shows a compositional bias: low complexity.

The protein belongs to the ubiquitin-activating E1 family. UBA5 subfamily.

E1-like enzyme which activates UFM1. In Drosophila simulans (Fruit fly), this protein is Ubiquitin-like modifier-activating enzyme 5.